The following is a 102-amino-acid chain: Protein isd11 (102 aa).

It belongs to the complex I LYR family.

Its subcellular location is the mitochondrion. Its function is as follows. Required for mitochondrial iron-sulfur (Fe-S) protein biosynthesis. In Schizosaccharomyces pombe (strain 972 / ATCC 24843) (Fission yeast), this protein is Protein isd11 (isd11).